Consider the following 87-residue polypeptide: U-scoloptoxin(23)-Er1a (87 aa).

The signal sequence occupies residues 1 to 29 (MSLIVVRTHSFLFVLVLLLFASVFHSVDS). The tract at residues 32–54 (FNPNGRYGRRDSASALSDASENK) is disordered.

This sequence belongs to the scoloptoxin-23 family. Expressed by the venom gland.

It is found in the secreted. This is U-scoloptoxin(23)-Er1a from Ethmostigmus rubripes (Giant centipede).